The primary structure comprises 174 residues: RNA pyrophosphohydrolase (174 aa).

The region spanning 6 to 149 is the Nudix hydrolase domain; the sequence is GFRANVGIII…KRDVYRKVMK (144 aa). Positions 38-59 match the Nudix box motif; sequence GGVDDGESAEEAMYRELYEEVG.

Belongs to the Nudix hydrolase family. RppH subfamily. A divalent metal cation is required as a cofactor.

Functionally, accelerates the degradation of transcripts by removing pyrophosphate from the 5'-end of triphosphorylated RNA, leading to a more labile monophosphorylated state that can stimulate subsequent ribonuclease cleavage. In Shewanella oneidensis (strain ATCC 700550 / JCM 31522 / CIP 106686 / LMG 19005 / NCIMB 14063 / MR-1), this protein is RNA pyrophosphohydrolase.